Consider the following 474-residue polypeptide: ATP synthase subunit beta (474 aa).

151-158 is an ATP binding site; the sequence is GGAGVGKT.

Belongs to the ATPase alpha/beta chains family. In terms of assembly, F-type ATPases have 2 components, CF(1) - the catalytic core - and CF(0) - the membrane proton channel. CF(1) has five subunits: alpha(3), beta(3), gamma(1), delta(1), epsilon(1). CF(0) has four main subunits: a(1), b(1), b'(1) and c(9-12).

It is found in the cell inner membrane. It carries out the reaction ATP + H2O + 4 H(+)(in) = ADP + phosphate + 5 H(+)(out). Its function is as follows. Produces ATP from ADP in the presence of a proton gradient across the membrane. The catalytic sites are hosted primarily by the beta subunits. The sequence is that of ATP synthase subunit beta from Jannaschia sp. (strain CCS1).